The primary structure comprises 237 residues: Ribosomal RNA small subunit methyltransferase G (237 aa).

Residues Gly78, Phe83, 129–130, and Arg148 each bind S-adenosyl-L-methionine; that span reads AE. The segment at 216 to 237 is disordered; the sequence is SKKKETPNKYPRKAGTPNKKPL.

Belongs to the methyltransferase superfamily. RNA methyltransferase RsmG family.

It localises to the cytoplasm. Its function is as follows. Specifically methylates the N7 position of a guanine in 16S rRNA. The chain is Ribosomal RNA small subunit methyltransferase G from Streptococcus agalactiae serotype V (strain ATCC BAA-611 / 2603 V/R).